The primary structure comprises 206 residues: uncharacterized protein (206 aa).

Residues 81-132 (EEQQQQQHHVHGPGCSHGHHHDSHANDGHHDEHHDEHHDHVNPDDVEDEFPR) are disordered. A compositionally biased stretch (low complexity) spans 82 to 96 (EQQQQQHHVHGPGCS). The segment covering 103–123 (SHANDGHHDEHHDEHHDHVNP) has biased composition (basic and acidic residues). The helical transmembrane segment at 150 to 166 (YLTALCLLPIIGSLFSI) threads the bilayer.

It is found in the membrane. This is an uncharacterized protein from Dictyostelium discoideum (Social amoeba).